Reading from the N-terminus, the 313-residue chain is Ribosomal RNA small subunit methyltransferase H (313 aa).

Residues 33–35 (AGH), D53, F82, D103, and Q110 contribute to the S-adenosyl-L-methionine site.

It belongs to the methyltransferase superfamily. RsmH family.

Its subcellular location is the cytoplasm. It carries out the reaction cytidine(1402) in 16S rRNA + S-adenosyl-L-methionine = N(4)-methylcytidine(1402) in 16S rRNA + S-adenosyl-L-homocysteine + H(+). In terms of biological role, specifically methylates the N4 position of cytidine in position 1402 (C1402) of 16S rRNA. The chain is Ribosomal RNA small subunit methyltransferase H from Acetivibrio thermocellus (strain ATCC 27405 / DSM 1237 / JCM 9322 / NBRC 103400 / NCIMB 10682 / NRRL B-4536 / VPI 7372) (Clostridium thermocellum).